The following is a 411-amino-acid chain: LIM domain-binding protein 1 (411 aa).

Ser-2 bears the N-acetylserine mark. The residue at position 61 (Thr-61) is a Phosphothreonine. Phosphoserine is present on residues Ser-265 and Ser-302. 2 disordered regions span residues 283-330 (APPA…TFAL) and 367-411 (DAAN…QASQ). A compositionally biased stretch (low complexity) spans 302 to 318 (SGGSTMSSGGGNTNNSN). One can recognise an LIM interaction domain (LID) domain in the interval 336 to 375 (DVMVVGEPTLMGGEFGDEDERLITRLENTQFDAANGIDDE).

The protein belongs to the LDB family. In terms of assembly, interacts with ESR1. Forms homodimers and heterodimers. Interacts with and activates LHX1/LIM1. Interacts with the LIM domains of ISL1 and LMO2. Can assemble in a complex with LMO2 and TAL1/SCL but does not interact with TAL1/SCL directly. Strongly interacts with the LIM2 domain of LMX1A and more weakly with the LIM1 domain. Homodimerization is not required for, and does not effect, LMX1A-binding. Component of a nuclear TAL-1 complex composed at least of CBFA2T3, LDB1, TAL1 and TCF3. Interacts with LHX6 and LHX9. At neuronal promoters, forms a complex with LHX3 involved in the specification of interneurons, in motor neurons, it is displaced by ISL1 to form a ternary complex in which ISL1 contacts both LHX3 and LDB1. Interacts with SLK; leading to negatively regulate SLK kinase activity. Interacts with YWHAZ. Interacts with PRDM1/BLIMP1. Interacts with LMO4. Interacts with RLIM/RNF12; the interaction inhibits the ubiquitination of LMO proteins. Post-translationally, ubiquitinated by RLIM/RNF12, leading to its degradation by the proteasome. Expressed in a wide range of adult tissues including brain, heart, skeletal muscle, colon, thymus, spleen, kidney, liver, small intestine, lung and peripheral blood leukocytes.

The protein localises to the nucleus. Binds to the LIM domain of a wide variety of LIM domain-containing transcription factors. May regulate the transcriptional activity of LIM-containing proteins by determining specific partner interactions. Plays a role in the development of interneurons and motor neurons in cooperation with LHX3 and ISL1. Acts synergistically with LHX1/LIM1 in axis formation and activation of gene expression. Acts with LMO2 in the regulation of red blood cell development, maintaining erythroid precursors in an immature state. In Homo sapiens (Human), this protein is LIM domain-binding protein 1 (LDB1).